A 689-amino-acid polypeptide reads, in one-letter code: Glycine--tRNA ligase beta subunit (689 aa).

Belongs to the class-II aminoacyl-tRNA synthetase family. In terms of assembly, tetramer of two alpha and two beta subunits.

The protein resides in the cytoplasm. It carries out the reaction tRNA(Gly) + glycine + ATP = glycyl-tRNA(Gly) + AMP + diphosphate. This is Glycine--tRNA ligase beta subunit from Shewanella baltica (strain OS185).